The chain runs to 101 residues: MAKVSSIKKNESRKKKSQSLHNKRLALKSKIYDKNISLEERFSLVMSLAQLPRNSSSTRIRNRCELTGRPRGVTRKFGISRNKLRELIGRGLVPGVVKSSW.

The tract at residues 1-22 (MAKVSSIKKNESRKKKSQSLHN) is disordered. Basic residues predominate over residues 11–22 (ESRKKKSQSLHN).

This sequence belongs to the universal ribosomal protein uS14 family. In terms of assembly, part of the 30S ribosomal subunit. Contacts proteins S3 and S10.

Functionally, binds 16S rRNA, required for the assembly of 30S particles and may also be responsible for determining the conformation of the 16S rRNA at the A site. The chain is Small ribosomal subunit protein uS14 from Rickettsia conorii (strain ATCC VR-613 / Malish 7).